Reading from the N-terminus, the 118-residue chain is Large ribosomal subunit protein uL24 (118 aa).

Belongs to the universal ribosomal protein uL24 family. As to quaternary structure, part of the 50S ribosomal subunit.

One of two assembly initiator proteins, it binds directly to the 5'-end of the 23S rRNA, where it nucleates assembly of the 50S subunit. Functionally, one of the proteins that surrounds the polypeptide exit tunnel on the outside of the subunit. In Prochlorococcus marinus (strain NATL2A), this protein is Large ribosomal subunit protein uL24.